Consider the following 388-residue polypeptide: MKRVVLIVLDSVGIGELPDAHLYGDEGSNTLANTAKKVGGFELPNLEKLGLGKIHPILGLKGDIKALGAYGKMGEKSPGKDTTTGHWEICGLILEKPFPVYPNGFPEDLIKRFEEAIGRKTLGNKPASGTAIIEELGEEHMRTGYPIVYTSADSVFQIAAHEEVIPLEELYKMCKIARGLLTGEHAVGRVIARPFTGTPGNFKRTANRHDYSLEPTGKTVLDKLVEQGYEVLGVGKIYDIFAGRGLTWHESTKNNEDGLVKTVNLLYKDFTGLLFTNLVDFDMVYGHRNNAEGYYEALKQFDSYLPKIMEKLREDDLLIITADHGCDPTTPSTDHSREYVPLLVYGHSIKEDVNLGTRETFADVAATLEEIFGLEPGIGQSFWGEIRK.

D10, D282, H287, D323, H324, and H335 together coordinate Mn(2+).

Belongs to the phosphopentomutase family. Mn(2+) is required as a cofactor.

It localises to the cytoplasm. The catalysed reaction is 2-deoxy-alpha-D-ribose 1-phosphate = 2-deoxy-D-ribose 5-phosphate. It catalyses the reaction alpha-D-ribose 1-phosphate = D-ribose 5-phosphate. It functions in the pathway carbohydrate degradation; 2-deoxy-D-ribose 1-phosphate degradation; D-glyceraldehyde 3-phosphate and acetaldehyde from 2-deoxy-alpha-D-ribose 1-phosphate: step 1/2. Its function is as follows. Isomerase that catalyzes the conversion of deoxy-ribose 1-phosphate (dRib-1-P) and ribose 1-phosphate (Rib-1-P) to deoxy-ribose 5-phosphate (dRib-5-P) and ribose 5-phosphate (Rib-5-P), respectively. This chain is Phosphopentomutase, found in Carboxydothermus hydrogenoformans (strain ATCC BAA-161 / DSM 6008 / Z-2901).